Consider the following 76-residue polypeptide: Omega-conotoxin-like TxO1 (76 aa).

Residues 1–22 (MKLTCVVIVAVLFLTVWTFATA) form the signal peptide. Residues 23–50 (DDSGNGLEKLFSNAHHEMKNPEASKLNE) constitute a propeptide that is removed on maturation. Cystine bridges form between cysteine 52-cysteine 67, cysteine 59-cysteine 70, and cysteine 66-cysteine 75.

This sequence belongs to the conotoxin O1 superfamily. In terms of tissue distribution, expressed by the venom duct.

It is found in the secreted. Its function is as follows. Omega-conotoxins act at presynaptic membranes, they bind and block voltage-gated calcium channels (Cav). This Conus textile (Cloth-of-gold cone) protein is Omega-conotoxin-like TxO1.